Consider the following 283-residue polypeptide: Pantothenate synthetase (283 aa).

ATP is bound at residue 33 to 40 (MGALHEGH). Catalysis depends on His-40, which acts as the Proton donor. Gln-64 lines the (R)-pantoate pocket. Gln-64 lines the beta-alanine pocket. 150–153 (GEKD) contributes to the ATP binding site. A (R)-pantoate-binding site is contributed by Gln-156. ATP contacts are provided by residues Ile-179 and 187 to 190 (MSSR).

The protein belongs to the pantothenate synthetase family. As to quaternary structure, homodimer.

It localises to the cytoplasm. The enzyme catalyses (R)-pantoate + beta-alanine + ATP = (R)-pantothenate + AMP + diphosphate + H(+). Its pathway is cofactor biosynthesis; (R)-pantothenate biosynthesis; (R)-pantothenate from (R)-pantoate and beta-alanine: step 1/1. Catalyzes the condensation of pantoate with beta-alanine in an ATP-dependent reaction via a pantoyl-adenylate intermediate. The protein is Pantothenate synthetase of Mesorhizobium japonicum (strain LMG 29417 / CECT 9101 / MAFF 303099) (Mesorhizobium loti (strain MAFF 303099)).